The primary structure comprises 478 residues: UDP-N-acetylmuramate--L-alanine ligase (478 aa).

ATP is bound at residue 122–128 (GTHGKTT).

This sequence belongs to the MurCDEF family.

It is found in the cytoplasm. It carries out the reaction UDP-N-acetyl-alpha-D-muramate + L-alanine + ATP = UDP-N-acetyl-alpha-D-muramoyl-L-alanine + ADP + phosphate + H(+). Its pathway is cell wall biogenesis; peptidoglycan biosynthesis. Cell wall formation. The sequence is that of UDP-N-acetylmuramate--L-alanine ligase from Stenotrophomonas maltophilia (strain R551-3).